Reading from the N-terminus, the 357-residue chain is DNA replication and repair protein RecF (357 aa).

Residue 31-38 (GQNGAGKT) coordinates ATP.

This sequence belongs to the RecF family.

It localises to the cytoplasm. Functionally, the RecF protein is involved in DNA metabolism; it is required for DNA replication and normal SOS inducibility. RecF binds preferentially to single-stranded, linear DNA. It also seems to bind ATP. This chain is DNA replication and repair protein RecF, found in Coxiella burnetii (strain RSA 493 / Nine Mile phase I).